The chain runs to 90 residues: UPF0297 protein LVIS_1222 (90 aa).

This sequence belongs to the UPF0297 family.

The sequence is that of UPF0297 protein LVIS_1222 from Levilactobacillus brevis (strain ATCC 367 / BCRC 12310 / CIP 105137 / JCM 1170 / LMG 11437 / NCIMB 947 / NCTC 947) (Lactobacillus brevis).